The following is a 345-amino-acid chain: Fructose-1,6-bisphosphatase class 1 1 (345 aa).

The Mg(2+) site is built by Glu-90, Asp-109, Leu-111, and Asp-112. Substrate-binding positions include 112-115 and Asn-200; that span reads DGSS. Residue Glu-272 coordinates Mg(2+).

It belongs to the FBPase class 1 family. As to quaternary structure, homotetramer. It depends on Mg(2+) as a cofactor.

It is found in the cytoplasm. It carries out the reaction beta-D-fructose 1,6-bisphosphate + H2O = beta-D-fructose 6-phosphate + phosphate. It functions in the pathway carbohydrate biosynthesis; gluconeogenesis. This is Fructose-1,6-bisphosphatase class 1 1 from Nitrobacter hamburgensis (strain DSM 10229 / NCIMB 13809 / X14).